Reading from the N-terminus, the 237-residue chain is MQKLSEVYRGKAKTVYATENPDFLVLEFRNDTSALDGKRIEQFYRKGIINNQFNHFIMLKLEEAGIPTQLERLLSENELLVKKLDMFPLESVIRNRAAGSLEKRLALQEGLLLDPPIYDLFLKNDSLHDPIVTESYCETFGWASTAHLVKMKELSYKVNDVLSPLFDAADLILVDFKLEFGLFKGEVILGDEFSPDGCRIWDKTTLNKLDKDRFRQNLGGLIEAYEEVAKRIGVPLN.

It belongs to the SAICAR synthetase family.

It catalyses the reaction 5-amino-1-(5-phospho-D-ribosyl)imidazole-4-carboxylate + L-aspartate + ATP = (2S)-2-[5-amino-1-(5-phospho-beta-D-ribosyl)imidazole-4-carboxamido]succinate + ADP + phosphate + 2 H(+). It functions in the pathway purine metabolism; IMP biosynthesis via de novo pathway; 5-amino-1-(5-phospho-D-ribosyl)imidazole-4-carboxamide from 5-amino-1-(5-phospho-D-ribosyl)imidazole-4-carboxylate: step 1/2. The chain is Phosphoribosylaminoimidazole-succinocarboxamide synthase from Hamiltonella defensa subsp. Acyrthosiphon pisum (strain 5AT).